Consider the following 269-residue polypeptide: MTPLKIAIAGANGRMGRVLVEAVNNHPDTVLSGALEHSGSEALGLDAGYAVGLKTGIAISDDVDAVLAQSDVLIDFTRPEPTLKHLQKCVEKQVNIIIGTTGFDDAGKAAIHTAAEQTGIVFAANFSVGVNLTFHILDTVARVLNEGYDIEIIEGHHRHKVDAPSGTALRMGEVIAGALGRDLKQCAVYGREGHTGPRDPSTIGFATVRAGDIVGDHTALFATDGERVEITHKAGSRMTFAAGAVRAAVWVNGKTGLYDMQDVLGLNNR.

NAD(+)-binding positions include 10 to 15, Glu36, 99 to 101, and 123 to 126; these read GANGRM, GTT, and AANF. The active-site Proton donor/acceptor is His156. His157 is a (S)-2,3,4,5-tetrahydrodipicolinate binding site. The Proton donor role is filled by Lys160. 166–167 contributes to the (S)-2,3,4,5-tetrahydrodipicolinate binding site; it reads GT.

It belongs to the DapB family.

Its subcellular location is the cytoplasm. The catalysed reaction is (S)-2,3,4,5-tetrahydrodipicolinate + NAD(+) + H2O = (2S,4S)-4-hydroxy-2,3,4,5-tetrahydrodipicolinate + NADH + H(+). It catalyses the reaction (S)-2,3,4,5-tetrahydrodipicolinate + NADP(+) + H2O = (2S,4S)-4-hydroxy-2,3,4,5-tetrahydrodipicolinate + NADPH + H(+). It functions in the pathway amino-acid biosynthesis; L-lysine biosynthesis via DAP pathway; (S)-tetrahydrodipicolinate from L-aspartate: step 4/4. Catalyzes the conversion of 4-hydroxy-tetrahydrodipicolinate (HTPA) to tetrahydrodipicolinate. The sequence is that of 4-hydroxy-tetrahydrodipicolinate reductase from Neisseria meningitidis serogroup C (strain 053442).